A 500-amino-acid polypeptide reads, in one-letter code: Probable serine carboxypeptidase CPVL (500 aa).

Residues 1–23 (MKVSLSFLLTILIVIITIKVNLS) form the signal peptide. Asn110 and Asn161 each carry an N-linked (GlcNAc...) asparagine glycan. Ser233 is a catalytic residue. Asn333 and Asn360 each carry an N-linked (GlcNAc...) asparagine glycan. Catalysis depends on residues Asp414 and His474.

Belongs to the peptidase S10 family.

Its subcellular location is the secreted. In terms of biological role, may be involved in the digestion of phagocytosed particles in the lysosome, participation in an inflammatory protease cascade, and trimming of peptides for antigen presentation. This Dictyostelium discoideum (Social amoeba) protein is Probable serine carboxypeptidase CPVL (cpvl).